A 355-amino-acid polypeptide reads, in one-letter code: Histidinol-phosphate aminotransferase (355 aa).

Residue K218 is modified to N6-(pyridoxal phosphate)lysine.

This sequence belongs to the class-II pyridoxal-phosphate-dependent aminotransferase family. Histidinol-phosphate aminotransferase subfamily. As to quaternary structure, homodimer. The cofactor is pyridoxal 5'-phosphate.

It carries out the reaction L-histidinol phosphate + 2-oxoglutarate = 3-(imidazol-4-yl)-2-oxopropyl phosphate + L-glutamate. It participates in amino-acid biosynthesis; L-histidine biosynthesis; L-histidine from 5-phospho-alpha-D-ribose 1-diphosphate: step 7/9. This Pelodictyon phaeoclathratiforme (strain DSM 5477 / BU-1) protein is Histidinol-phosphate aminotransferase.